Reading from the N-terminus, the 304-residue chain is Olfactory receptor 8G2 (304 aa).

At 1-41 (MVFLSSVETDQRKMSAGNHSSVTEFILAGLSEQPELQLRLF) the chain is on the extracellular side. N-linked (GlcNAc...) asparagine glycosylation is present at Asn-18. A helical membrane pass occupies residues 42–62 (LLFLGIYVVTVVGNLSMITLI). Residues 63–69 (GLSSHLH) are Cytoplasmic-facing. The chain crosses the membrane as a helical span at residues 70-90 (TPMYYFLSGLSFIDLCHSTII). The Extracellular segment spans residues 91-110 (TPKMLVNFVTEKNIISYPEC). A disulfide bridge connects residues Cys-110 and Cys-192. Residues 111-130 (MTQLYFFLIFAIAECHMLAV) form a helical membrane-spanning segment. Residues 131–154 (TAYDRYVAICSPLLYNVIMSYHHC) lie on the Cytoplasmic side of the membrane. A helical membrane pass occupies residues 155–175 (FWLTVGVYVLGILGSTIHTGF). Residues 176–193 (MLRLFLCKTNVINHYFCD) are Extracellular-facing. Residues 194-214 (LFPLLGLSCSSTYINELLVLV) form a helical membrane-spanning segment. At 215–217 (LSA) the chain is on the cytoplasmic side. The helical transmembrane segment at 218-238 (FNILTPALTILASYIFIIASI) threads the bilayer. The Extracellular portion of the chain corresponds to 239-257 (LRIRSTEGRSKAFSTCSSH). The helical transmembrane segment at 258–278 (ILAVAVFFGSAAFMYLQPSSV) threads the bilayer. Residues 279–304 (SSMDQRKVSSVFYTTIVPMLNPQSIA) are Cytoplasmic-facing.

Belongs to the G-protein coupled receptor 1 family.

Its subcellular location is the cell membrane. Its function is as follows. Odorant receptor. The polypeptide is Olfactory receptor 8G2 (Homo sapiens (Human)).